The chain runs to 326 residues: Protein LEG1 homolog (326 aa).

Positions 1–22 are cleaved as a signal peptide; that stretch reads MKSNKTIFLILLFLINFNSIYS. N-linked (GlcNAc...) asparagine glycans are attached at residues N58, N85, N165, N226, and N245.

This sequence belongs to the LEG1 family.

The protein localises to the secreted. The sequence is that of Protein LEG1 homolog from Dictyostelium discoideum (Social amoeba).